A 345-amino-acid polypeptide reads, in one-letter code: Methylthioribose-1-phosphate isomerase (345 aa).

Substrate is bound by residues 47–49 (RGA), arginine 90, and glutamine 197. Aspartate 238 functions as the Proton donor in the catalytic mechanism. A substrate-binding site is contributed by 248–249 (NK).

This sequence belongs to the eIF-2B alpha/beta/delta subunits family. MtnA subfamily.

It catalyses the reaction 5-(methylsulfanyl)-alpha-D-ribose 1-phosphate = 5-(methylsulfanyl)-D-ribulose 1-phosphate. Its pathway is amino-acid biosynthesis; L-methionine biosynthesis via salvage pathway; L-methionine from S-methyl-5-thio-alpha-D-ribose 1-phosphate: step 1/6. In terms of biological role, catalyzes the interconversion of methylthioribose-1-phosphate (MTR-1-P) into methylthioribulose-1-phosphate (MTRu-1-P). This chain is Methylthioribose-1-phosphate isomerase, found in Caldanaerobacter subterraneus subsp. tengcongensis (strain DSM 15242 / JCM 11007 / NBRC 100824 / MB4) (Thermoanaerobacter tengcongensis).